The primary structure comprises 146 residues: Hemoglobin subunit beta (146 aa).

A Globin domain is found at 2–146 (HWSAEEKQLI…VAHALARKYH (145 aa)). Positions 63 and 92 each coordinate heme b.

This sequence belongs to the globin family. In terms of assembly, heterotetramer of two alpha chains and two beta chains. In terms of tissue distribution, red blood cells.

Its function is as follows. Involved in oxygen transport from the lung to the various peripheral tissues. The polypeptide is Hemoglobin subunit beta (HBB) (Anser anser anser (Western greylag goose)).